A 96-amino-acid chain; its full sequence is Co-chaperonin GroES (96 aa).

The protein belongs to the GroES chaperonin family. In terms of assembly, heptamer of 7 subunits arranged in a ring. Interacts with the chaperonin GroEL.

It localises to the cytoplasm. Together with the chaperonin GroEL, plays an essential role in assisting protein folding. The GroEL-GroES system forms a nano-cage that allows encapsulation of the non-native substrate proteins and provides a physical environment optimized to promote and accelerate protein folding. GroES binds to the apical surface of the GroEL ring, thereby capping the opening of the GroEL channel. The protein is Co-chaperonin GroES of Vibrio campbellii (strain ATCC BAA-1116).